The following is a 407-amino-acid chain: Methylthioribose kinase (407 aa).

ATP is bound by residues Asn40, Lys57, and 111 to 113 (EDL). Substrate is bound at residue Asp229. 246-248 (DAE) contacts ATP. Arg344 is a substrate binding site.

The protein belongs to the methylthioribose kinase family. In terms of assembly, homodimer.

It catalyses the reaction 5-(methylsulfanyl)-D-ribose + ATP = 5-(methylsulfanyl)-alpha-D-ribose 1-phosphate + ADP + H(+). Its pathway is amino-acid biosynthesis; L-methionine biosynthesis via salvage pathway; S-methyl-5-thio-alpha-D-ribose 1-phosphate from S-methyl-5'-thioadenosine (hydrolase route): step 2/2. In terms of biological role, catalyzes the phosphorylation of methylthioribose into methylthioribose-1-phosphate. The polypeptide is Methylthioribose kinase (Yersinia pseudotuberculosis serotype IB (strain PB1/+)).